Reading from the N-terminus, the 363-residue chain is Pyrimidine monooxygenase RutA (363 aa).

FMN is bound by residues 49-50 (IK), N115, E124, 140-141 (RY), and S190.

The protein belongs to the NtaA/SnaA/DszA monooxygenase family. RutA subfamily.

The catalysed reaction is uracil + FMNH2 + NADH + O2 = (Z)-3-ureidoacrylate + FMN + NAD(+) + H2O + H(+). The enzyme catalyses thymine + FMNH2 + NADH + O2 = (Z)-2-methylureidoacrylate + FMN + NAD(+) + H2O + H(+). Functionally, catalyzes the pyrimidine ring opening between N-3 and C-4 by an unusual flavin hydroperoxide-catalyzed mechanism, adding oxygen atoms in the process to yield ureidoacrylate peracid, that immediately reacts with FMN forming ureidoacrylate and FMN-N(5)-oxide. The FMN-N(5)-oxide reacts spontaneously with NADH to produce FMN. Requires the flavin reductase RutF to regenerate FMN in vivo. The protein is Pyrimidine monooxygenase RutA of Escherichia coli O127:H6 (strain E2348/69 / EPEC).